Reading from the N-terminus, the 199-residue chain is Molybdenum cofactor guanylyltransferase (199 aa).

GTP-binding positions include 12–14 (LAG), K25, N53, D71, and D101. Residue D101 coordinates Mg(2+).

It belongs to the MobA family. In terms of assembly, monomer. Mg(2+) serves as cofactor.

Its subcellular location is the cytoplasm. The enzyme catalyses Mo-molybdopterin + GTP + H(+) = Mo-molybdopterin guanine dinucleotide + diphosphate. Functionally, transfers a GMP moiety from GTP to Mo-molybdopterin (Mo-MPT) cofactor (Moco or molybdenum cofactor) to form Mo-molybdopterin guanine dinucleotide (Mo-MGD) cofactor. The protein is Molybdenum cofactor guanylyltransferase of Polynucleobacter asymbioticus (strain DSM 18221 / CIP 109841 / QLW-P1DMWA-1) (Polynucleobacter necessarius subsp. asymbioticus).